A 457-amino-acid polypeptide reads, in one-letter code: MQKYISEARLLLALAIPVILAQIAQTAMGFVDTVMAGGYSATDMAAVAIGTSIWLPAILFGHGLLLALTPVIAQLNGSGRRERIAHQVRQGFWLAGFVSVLIMLVLWNAGYIIRSMENIDPALADKAVGYLRALLWGAPGYLFFQVARNQCEGLAKTKPGMVMGFIGLLVNIPVNYIFIYGHFGMPELGGVGCGVATAAVYWVMFLAMVSYIKRARSMRDIRNEKGTAKPDPAVMKRLIQLGLPIALALFFEVTLFAVVALLVSPLGIVDVAGHQIALNFSSLMFVLPMSLAAAVTIRVGYRLGQGSTLDAQTAARTGLMVGVCMATLTAIFTVSLREQIALLYNDNPEVVTLAAHLMLLAAVYQISDSIQVIGSGILRGYKDTRSIFYITFTAYWVLGLPSGYILALTDLVVEPMGPAGFWIGFIIGLTSAAIMMMLRMRFLQRLPSAIILQRAAR.

A run of 12 helical transmembrane segments spans residues 11–31 (LLAL…MGFV), 53–73 (IWLP…PVIA), 93–113 (WLAG…GYII), 127–147 (AVGY…FQVA), 160–180 (GMVM…IFIY), 189–209 (GGVG…LAMV), 243–263 (LPIA…ALLV), 276–296 (IALN…AAVT), 314–334 (AART…IFTV), 350–370 (VVTL…SDSI), 387–407 (IFYI…YILA), and 418–438 (PAGF…MMML).

The protein belongs to the multi antimicrobial extrusion (MATE) (TC 2.A.66.1) family. MdtK subfamily.

The protein resides in the cell inner membrane. Functionally, multidrug efflux pump that functions probably as a Na(+)/drug antiporter. The polypeptide is Multidrug resistance protein MdtK (Escherichia coli O17:K52:H18 (strain UMN026 / ExPEC)).